The following is a 359-amino-acid chain: Mitochondrial calcium uniporter regulator 1 (359 aa).

Topologically, residues 1–68 are mitochondrial intermembrane; that stretch reads MDCGSVGGQR…ARGGVSRASP (68 aa). Residues 69–85 traverse the membrane as a helical segment; sequence LLLLLLVPSPRLAAAAP. Residues 86–338 are Mitochondrial matrix-facing; that stretch reads RRQLGDWERS…LESHKLDNIK (253 aa). A coiled-coil region spans residues 235 to 310; it reads EKSEFSALRA…VALHAQQDRA (76 aa). A helical membrane pass occupies residues 339–358; the sequence is YLAGSIFTCLTVALGFYRLW. Position 359 (Ile-359) is a topological domain, mitochondrial intermembrane.

It belongs to the CCDC90 family. As to quaternary structure, interacts (via coiled coil regions) with MCU; the interaction is direct. Interacts with SMDT1/EMRE; the interaction is direct. Interacts with PPIF. As to expression, ubiquitously expressed.

It localises to the mitochondrion inner membrane. In terms of biological role, key regulator of mitochondrial calcium uniporter (MCU) required for calcium entry into mitochondrion. Plays a direct role in uniporter-mediated calcium uptake via a direct interaction with MCU. Probably involved in the assembly of the membrane components of the uniporter complex (uniplex). This is Mitochondrial calcium uniporter regulator 1 from Homo sapiens (Human).